The following is a 480-amino-acid chain: Glutamate--tRNA ligase (480 aa).

Residues 21–31 (PSPTGYLHVGG) carry the 'HIGH' region motif. The segment covering 122-146 (NTQEQNKQKPRYDRHCLGDHKHSPE) has biased composition (basic and acidic residues). Positions 122 to 149 (NTQEQNKQKPRYDRHCLGDHKHSPEQPH) are disordered. A 'KMSKS' region motif is present at residues 248–252 (KLSKR). Lys-251 provides a ligand contact to ATP.

This sequence belongs to the class-I aminoacyl-tRNA synthetase family. Glutamate--tRNA ligase type 1 subfamily. Monomer.

It is found in the cytoplasm. The catalysed reaction is tRNA(Glu) + L-glutamate + ATP = L-glutamyl-tRNA(Glu) + AMP + diphosphate. Catalyzes the attachment of glutamate to tRNA(Glu) in a two-step reaction: glutamate is first activated by ATP to form Glu-AMP and then transferred to the acceptor end of tRNA(Glu). This is Glutamate--tRNA ligase from Pasteurella multocida (strain Pm70).